The chain runs to 725 residues: Palmitoyltransferase AKR1 (725 aa).

Residues 1–303 (MGTIAMASIN…LKDKRSFVTR (303 aa)) lie on the Cytoplasmic side of the membrane. ANK repeat units follow at residues 84 to 113 (EGITPLHWAAINNQYAMCKFLIEHGAEINR), 118 to 147 (SIATPLQWAAQRCHYYTVNLLLQHGADPLV), 151 to 180 (QGYNTLHISTFNGNVLLLVLLLHQGIPVDV), 184 to 213 (FGHTALMWAAYKGFPQCVDLFLRWGASVHA), and 217 to 246 (QGFTALHWALVKGSPGCILKLIEYGADRFA). A helical transmembrane segment spans residues 304-324 (FLFFWPFVLVWAMLVAMSSAP). At 325 to 326 (VY) the chain is on the lumenal side. Residues 327 to 347 (IGVPLGIAAVYAIQWVAQQVL) form a helical membrane-spanning segment. Residues 348-364 (EYAPSDMRHFHKTPWLT) are Cytoplasmic-facing. The helical transmembrane segment at 365 to 385 (GIFAATLFWTGVNWLTTVLFA) threads the bilayer. Over 386–397 (TTLGAPEGKGHG) the chain is Lumenal. Residues 398–418 (ILNFLFALFFGFTVYFYIASM) traverse the membrane as a helical segment. Residues 419–495 (RYDPGFVPKM…NCVGINNHRH (77 aa)) lie on the Cytoplasmic side of the membrane. Residues 451–501 (NFCVTCMIQTPLRSKHCRRCQRCVAKHDHHCPWVYNCVGINNHRHFFFYLI) enclose the DHHC domain. The S-palmitoyl cysteine intermediate role is filled by cysteine 481. Residues 496-516 (FFFYLISLTMGIVSYDFLLYY) traverse the membrane as a helical segment. Residues 517–547 (YFDTVSKNASETCNVLSPTLCKYINADSYTS) lie on the Lumenal side of the membrane. The helical transmembrane segment at 548–568 (ILAIWITMQLLWVTMLLFTQF) threads the bilayer. Residues 569-725 (IQVARAMTTY…YEAVGTEDVV (157 aa)) lie on the Cytoplasmic side of the membrane.

It belongs to the DHHC palmitoyltransferase family. AKR/ZDHHC17 subfamily.

Its subcellular location is the early endosome membrane. The protein resides in the golgi apparatus membrane. The catalysed reaction is L-cysteinyl-[protein] + hexadecanoyl-CoA = S-hexadecanoyl-L-cysteinyl-[protein] + CoA. Functionally, palmitoyltransferase specific for casein kinase 1. The protein is Palmitoyltransferase AKR1 (AKR1) of Gibberella zeae (strain ATCC MYA-4620 / CBS 123657 / FGSC 9075 / NRRL 31084 / PH-1) (Wheat head blight fungus).